The chain runs to 154 residues: Myoglobin (154 aa).

Residues 2-148 (GLSDGEWQLV…FRKDMASNYK (147 aa)) form the Globin domain. S4 is modified (phosphoserine). H65 serves as a coordination point for nitrite. O2 is bound at residue H65. T68 is modified (phosphothreonine). A heme b-binding site is contributed by H94.

Belongs to the globin family. Monomeric.

The protein localises to the cytoplasm. The protein resides in the sarcoplasm. The catalysed reaction is Fe(III)-heme b-[protein] + nitric oxide + H2O = Fe(II)-heme b-[protein] + nitrite + 2 H(+). The enzyme catalyses H2O2 + AH2 = A + 2 H2O. In terms of biological role, monomeric heme protein which primary function is to store oxygen and facilitate its diffusion within muscle tissues. Reversibly binds oxygen through a pentacoordinated heme iron and enables its timely and efficient release as needed during periods of heightened demand. Depending on the oxidative conditions of tissues and cells, and in addition to its ability to bind oxygen, it also has a nitrite reductase activity whereby it regulates the production of bioactive nitric oxide. Under stress conditions, like hypoxia and anoxia, it also protects cells against reactive oxygen species thanks to its pseudoperoxidase activity. The sequence is that of Myoglobin from Homo sapiens (Human).